The chain runs to 155 residues: MTKVDFWPTLKDAYEPLYPQQLEILRQQVVSEGGPTATIQSRFNYAWGLIKSTDVNDERLGVKILTDIYKEAESRRRECLYYLTIGCYKLGEYSMAKRYVDTLFEHERNNKQVGALKSMVEDKIQKETLKGVVVAGGVLAGAVAVASFFLRNKRR.

Residues 1 to 131 (MTKVDFWPTL…DKIQKETLKG (131 aa)) are Cytoplasmic-facing. The chain crosses the membrane as a helical span at residues 132 to 149 (VVVAGGVLAGAVAVASFF). Residues 150 to 155 (LRNKRR) lie on the Mitochondrial intermembrane side of the membrane.

The protein belongs to the FIS1 family. As to quaternary structure, interacts with DNM1 and MDV1.

Its subcellular location is the mitochondrion outer membrane. Its function is as follows. Has a role in mitochondrial fission. Has a role in outer membrane fission but not matrix separation. Required for targeting MDV1 to the mitochondria. Regulates the assembly of DNM1 into punctate structures, in the mitochondrial tubules, promoting mitochondrial membrane constriction and/or division. The polypeptide is Mitochondrial fission 1 protein (FIS1) (Saccharomyces cerevisiae (strain ATCC 204508 / S288c) (Baker's yeast)).